Consider the following 300-residue polypeptide: Ribosomal protein bS6--L-glutamate ligase (300 aa).

An ATP-grasp domain is found at 104 to 287; the sequence is MQLLARQGID…IAGKMIRWIE (184 aa). Residues Lys-141, 178–179, Asp-187, and 211–213 each bind ATP; these read EY and RSN. Mg(2+) is bound by residues Asp-248, Glu-260, and Asn-262. Asp-248, Glu-260, and Asn-262 together coordinate Mn(2+).

It belongs to the RimK family. Requires Mg(2+) as cofactor. The cofactor is Mn(2+).

An L-glutamate ligase that catalyzes the ATP-dependent post-translational addition of glutamate residues to the C-terminus of ribosomal protein bS6 (RpsF). Is also able to catalyze the synthesis of poly-alpha-glutamate in vitro, via ATP hydrolysis from unprotected glutamate as substrate. The number of glutamate residues added to either RpsF or to poly-alpha-glutamate changes with pH. The protein is Ribosomal protein bS6--L-glutamate ligase of Shigella boydii serotype 18 (strain CDC 3083-94 / BS512).